The primary structure comprises 204 residues: Ribosome maturation factor RimP (204 aa).

The protein belongs to the RimP family.

Its subcellular location is the cytoplasm. Required for maturation of 30S ribosomal subunits. This chain is Ribosome maturation factor RimP, found in Albidiferax ferrireducens (strain ATCC BAA-621 / DSM 15236 / T118) (Rhodoferax ferrireducens).